Reading from the N-terminus, the 925-residue chain is Serine/threonine-protein kinase PLK4 (925 aa).

The 254-residue stretch at 12-265 folds into the Protein kinase domain; it reads FKVGNLLGKG…LSSVLDHPFM (254 aa). ATP contacts are provided by residues 18–26 and Lys41; that span reads LGKGSFAGV. 2 positions are modified to N6-acetyllysine: Lys45 and Lys46. Asp136 functions as the Proton acceptor in the catalytic mechanism. Disordered stretches follow at residues 262–283 and 328–394; these read HPFM…EDSM and KNSS…KTYS. Low complexity predominate over residues 330 to 341; the sequence is SSDFSSGDGSNF. Residues 342-353 are compositionally biased toward polar residues; that stretch reads CTQWGNPEQEAN. Over residues 359–369 the composition is skewed to basic and acidic residues; sequence RVIEDAEERPH. Residues 381-391 are compositionally biased toward polar residues; it reads RASPSNQSRAK. Position 400 is a phosphoserine (Ser400). Residues 517–538 are disordered; it reads EVMPQEPGLHPHSEQSKNRSME. The segment covering 525–536 has biased composition (basic and acidic residues); sequence LHPHSEQSKNRS. The region spanning 547-660 is the Cryptic POLO box 1 (CPB1) domain; sequence TLRSITSPLI…SRFIQLVRSK (114 aa). Positions 661-774 constitute a Cryptic POLO box 2 (CPB2) domain; that stretch reads TPKITYFTRY…GRKPGNTSSP (114 aa). Ser778 carries the post-translational modification Phosphoserine. Positions 841 to 919 constitute a POLO box domain; the sequence is QLLKSVFVKN…LSSILLMFSN (79 aa).

It belongs to the protein kinase superfamily. Ser/Thr protein kinase family. CDC5/Polo subfamily. Homodimer. Interacts with CEP152 (via N-terminus). Interacts with CEP78; this interaction may be important for proper PLK4 localization to the centriole and PLK4-induced overduplication of centrioles. Interacts with CEP131. Interacts simultaneously with TENT5C and CEP192. Interacts with TENT5C; this interaction leads to the TENT5C recruitment in the centrosome. Interacts with CEP85; this interaction may be important in cell migration and centriole assembly. Post-translationally, ubiquitinated; leading to its degradation by the proteasome. Deubiquitinated by USP54; leading to PLK4 stabilization. Tyrosine-phosphorylated by TEC. In terms of processing, acetylation by KAT2A and KAT2B impairs kinase activity by shifting the kinase to an inactive conformation. In terms of tissue distribution, expressed in tissues associated with mitotic and meiotic cell division. Highly expressed in testis.

It is found in the cytoplasm. The protein resides in the cytoskeleton. It localises to the microtubule organizing center. Its subcellular location is the centrosome. The protein localises to the centriole. It is found in the nucleus. The protein resides in the nucleolus. It localises to the cleavage furrow. It catalyses the reaction L-seryl-[protein] + ATP = O-phospho-L-seryl-[protein] + ADP + H(+). It carries out the reaction L-threonyl-[protein] + ATP = O-phospho-L-threonyl-[protein] + ADP + H(+). Functionally, serine/threonine-protein kinase that plays a central role in centriole duplication. Able to trigger procentriole formation on the surface of the parental centriole cylinder, leading to the recruitment of centriole biogenesis proteins such as SASS6, CPAP, CCP110, CEP135 and gamma-tubulin. When overexpressed, it is able to induce centrosome amplification through the simultaneous generation of multiple procentrioles adjoining each parental centriole during S phase. Phosphorylates 'Ser-151' of FBXW5 during the G1/S transition, leading to inhibit FBXW5 ability to ubiquitinate SASS6. Its central role in centriole replication suggests a possible role in tumorigenesis, centrosome aberrations being frequently observed in tumors. Phosphorylates CDC25C and CHEK2. Also involved in deuterosome-mediated centriole amplification in multiciliated that can generate more than 100 centrioles. Also involved in trophoblast differentiation by phosphorylating HAND1, leading to disrupt the interaction between HAND1 and MDFIC and activate HAND1. Required for the recruitment of STIL to the centriole and for STIL-mediated centriole amplification. Phosphorylates CEP131 at 'Ser-78' and PCM1 at 'Ser-372' which is essential for proper organization and integrity of centriolar satellites. This chain is Serine/threonine-protein kinase PLK4, found in Mus musculus (Mouse).